Consider the following 992-residue polypeptide: Probable RNA-dependent RNA polymerase 3 (992 aa).

Residues 88–113 (PRLSPGESPVQSPRTPAKKSCRASQD) form a disordered region.

It belongs to the RdRP family.

The enzyme catalyses RNA(n) + a ribonucleoside 5'-triphosphate = RNA(n+1) + diphosphate. In terms of biological role, probably involved in the RNA silencing pathway and required for the generation of small interfering RNAs (siRNAs). The sequence is that of Probable RNA-dependent RNA polymerase 3 (RDR3) from Arabidopsis thaliana (Mouse-ear cress).